The sequence spans 223 residues: Cuticular glutathione peroxidase (223 aa).

The N-terminal stretch at 1–19 (MSAQLLILSHVVLLQLIVA) is a signal peptide. N-linked (GlcNAc...) asparagine glycosylation is present at Asn-39. Cys-74 is a catalytic residue. A glycan (N-linked (GlcNAc...) asparagine) is linked at Asn-92.

Belongs to the glutathione peroxidase family. As to quaternary structure, homotetramer.

The protein localises to the secreted. It carries out the reaction 2 glutathione + H2O2 = glutathione disulfide + 2 H2O. In terms of biological role, could inhibit the oxidative burst of leukocytes and neutralize the secondary products of lipid peroxidation, thus providing the resistance of these parasites to immune effector mechanisms and their persistence in the mammalian host. It may also be involved in the formation of cross-linking residues such as dityrosine, trityrosine and isotrityrosine identified in cuticular collagen. Highly cross-linked external cortex may also serve to protect the parasite from immune attack. The chain is Cuticular glutathione peroxidase from Wuchereria bancrofti.